A 377-amino-acid chain; its full sequence is Chorismate synthase (377 aa).

Arg47 lines the NADP(+) pocket. FMN is bound by residues 124-126 (RSS), 252-253 (NS), Gly296, 311-315 (KPTPS), and Arg338.

Belongs to the chorismate synthase family. FMNH2 serves as cofactor.

It catalyses the reaction 5-O-(1-carboxyvinyl)-3-phosphoshikimate = chorismate + phosphate. The protein operates within metabolic intermediate biosynthesis; chorismate biosynthesis; chorismate from D-erythrose 4-phosphate and phosphoenolpyruvate: step 7/7. Its function is as follows. Catalyzes the anti-1,4-elimination of the C-3 phosphate and the C-6 proR hydrogen from 5-enolpyruvylshikimate-3-phosphate (EPSP) to yield chorismate, which is the branch point compound that serves as the starting substrate for the three terminal pathways of aromatic amino acid biosynthesis. This reaction introduces a second double bond into the aromatic ring system. The sequence is that of Chorismate synthase from Methanococcus vannielii (strain ATCC 35089 / DSM 1224 / JCM 13029 / OCM 148 / SB).